The chain runs to 393 residues: MTRIGTPLSPTATRVLLCGCGELGKEVVIELQRLGVEVIAVDRYANAPAMQVAHRSHVINMLDGVALRAVIEAEKPHYIVPEIEAIATATLVELENEGFNVVPTARATQLTMNREGIRRLAAEELDLPTSPYHFADTFEDYSKAVADLGYPCVVKPVMSSSGKGQSLLRSADDLQKAWDYAQEGGRAGKGRVIIEGFIDFEYEITLLTVRHVGGTTFLEPVGHRQEKGDYQESWQPQAMSPKALAESQRVAQAVTDALGGRGLFGVELFVKGDQVWFSEVSPRPHDTGLVTLISQELSQFALHARAILGLPIPVVRQFGPSASAVILPEGQSQQTSFANLGAALSEPDTAIRLFGKPEINGTRRMGVCLARDESVEAARAKATRASQAVKVEF.

Residues 22 to 23 (EL) and Glu-82 each bind N(1)-(5-phospho-beta-D-ribosyl)glycinamide. ATP is bound by residues Arg-114, Lys-155, 160 to 165 (SSGKGQ), 195 to 198 (EGFI), and Glu-203. The ATP-grasp domain maps to 119–308 (RLAAEELDLP…QFALHARAIL (190 aa)). Mg(2+) is bound by residues Glu-267 and Glu-279. Residues Asp-286, Lys-356, and 363 to 364 (RR) contribute to the N(1)-(5-phospho-beta-D-ribosyl)glycinamide site.

The protein belongs to the PurK/PurT family. In terms of assembly, homodimer.

The catalysed reaction is N(1)-(5-phospho-beta-D-ribosyl)glycinamide + formate + ATP = N(2)-formyl-N(1)-(5-phospho-beta-D-ribosyl)glycinamide + ADP + phosphate + H(+). It functions in the pathway purine metabolism; IMP biosynthesis via de novo pathway; N(2)-formyl-N(1)-(5-phospho-D-ribosyl)glycinamide from N(1)-(5-phospho-D-ribosyl)glycinamide (formate route): step 1/1. Involved in the de novo purine biosynthesis. Catalyzes the transfer of formate to 5-phospho-ribosyl-glycinamide (GAR), producing 5-phospho-ribosyl-N-formylglycinamide (FGAR). Formate is provided by PurU via hydrolysis of 10-formyl-tetrahydrofolate. This Pseudomonas entomophila (strain L48) protein is Formate-dependent phosphoribosylglycinamide formyltransferase.